The following is a 190-amino-acid chain: NADH-quinone oxidoreductase subunit C (190 aa).

The protein belongs to the complex I 30 kDa subunit family. As to quaternary structure, NDH-1 is composed of 14 different subunits. Subunits NuoB, C, D, E, F, and G constitute the peripheral sector of the complex.

The protein localises to the cell membrane. The enzyme catalyses a quinone + NADH + 5 H(+)(in) = a quinol + NAD(+) + 4 H(+)(out). In terms of biological role, NDH-1 shuttles electrons from NADH, via FMN and iron-sulfur (Fe-S) centers, to quinones in the respiratory chain. The immediate electron acceptor for the enzyme in this species is believed to be ubiquinone. Couples the redox reaction to proton translocation (for every two electrons transferred, four hydrogen ions are translocated across the cytoplasmic membrane), and thus conserves the redox energy in a proton gradient. The sequence is that of NADH-quinone oxidoreductase subunit C from Wolbachia sp. subsp. Brugia malayi (strain TRS).